Consider the following 519-residue polypeptide: Cilia- and flagella-associated protein 53 (519 aa).

2 coiled-coil regions span residues 80–107 (NRHL…LLES) and 210–339 (LAKE…QEEQ). The tract at residues 498–519 (TTAVHPFRRRDRRCSSSGGQMS) is disordered.

The protein belongs to the CFAP53 family.

Its subcellular location is the cytoplasm. It is found in the cytoskeleton. It localises to the cilium axoneme. The protein resides in the cilium basal body. Its function is as follows. Microtubule inner protein (MIP) part of the dynein-decorated doublet microtubules (DMTs) in cilia axoneme, which is required for motile cilia beating. Regulates motility patterns of both 9+0 and 9+2 motile cilia through differential localization and recruitment of axonemal dynein components. Required for cilium motility within the spinal canal and Kuppfer's vesicle and is involved in the establishment of left-right symmetry during embryogenesis. In Danio rerio (Zebrafish), this protein is Cilia- and flagella-associated protein 53.